Here is a 142-residue protein sequence, read N- to C-terminus: Large-conductance mechanosensitive channel (142 aa).

The next 3 membrane-spanning stretches (helical) occupy residues 10–30 (FAVK…GAFG), 40–60 (LIMP…LFIV), and 86–106 (GNFI…FVMV).

It belongs to the MscL family. Homopentamer.

It is found in the cell inner membrane. In terms of biological role, channel that opens in response to stretch forces in the membrane lipid bilayer. May participate in the regulation of osmotic pressure changes within the cell. In Acidovorax ebreus (strain TPSY) (Diaphorobacter sp. (strain TPSY)), this protein is Large-conductance mechanosensitive channel.